The primary structure comprises 74 residues: Brevinin-2MT1 (74 aa).

The signal sequence occupies residues 1 to 22 (MFTMKKSLLVLFFLGTISLSLC). A propeptide spans 23–39 (EEERNADEDDGEMTEEE) (removed in mature form). Cys-68 and Cys-74 form a disulfide bridge.

Belongs to the frog skin active peptide (FSAP) family. Brevinin subfamily. Expressed by the skin glands.

The protein resides in the secreted. Functionally, antimicrobial peptide. Active against a variety of Gram-negative and Gram-positive bacterial strains. Active against fungi. Shows hemolytic activity against human erythrocytes. This is Brevinin-2MT1 from Amolops mantzorum (Sichuan torrent frog).